A 744-amino-acid polypeptide reads, in one-letter code: Cullin-1 (744 aa).

The Cullin neddylation domain occupies 674–736; it reads DRRYAIDASI…RDYLERDKDN (63 aa).

The protein belongs to the cullin family. In terms of assembly, part of a SCF (SKP1-CUL1-F-box protein) E3 ubiquitin-protein ligase complex. Is able to form the SCF complex together with SKP1 and the rice black streaked dwarf virus RBSDV protein P7-2. Interacts with D3. Neddylated (rubylated). Deneddylation occurs upon interaction with the COP9 signalosome (CSN) complex. Expressed in dry seeds and coleoptiles.

Functionally, involved in ubiquitination and subsequent proteasomal degradation of target proteins. The protein is Cullin-1 of Oryza sativa subsp. japonica (Rice).